Consider the following 436-residue polypeptide: GTPase Der (436 aa).

EngA-type G domains are found at residues 3–168 (PLIA…PESD) and 177–352 (IRLA…QNRS). GTP-binding positions include 9-16 (GRPNVGKS), 56-60 (DTGGY), 120-123 (NKAE), 183-190 (GRPNVGKS), 230-234 (DTAGL), and 295-298 (NKWD). The KH-like domain occupies 353-436 (RKISTSALNR…VTISLRFMQK (84 aa)).

This sequence belongs to the TRAFAC class TrmE-Era-EngA-EngB-Septin-like GTPase superfamily. EngA (Der) GTPase family. Associates with the 50S ribosomal subunit.

GTPase that plays an essential role in the late steps of ribosome biogenesis. The chain is GTPase Der from Chlorobium luteolum (strain DSM 273 / BCRC 81028 / 2530) (Pelodictyon luteolum).